The sequence spans 179 residues: Large ribosomal subunit protein uL5 (179 aa).

The protein belongs to the universal ribosomal protein uL5 family. Part of the 50S ribosomal subunit; part of the 5S rRNA/L5/L18/L25 subcomplex. Contacts the 5S rRNA and the P site tRNA. Forms a bridge to the 30S subunit in the 70S ribosome.

In terms of biological role, this is one of the proteins that bind and probably mediate the attachment of the 5S RNA into the large ribosomal subunit, where it forms part of the central protuberance. In the 70S ribosome it contacts protein S13 of the 30S subunit (bridge B1b), connecting the 2 subunits; this bridge is implicated in subunit movement. Contacts the P site tRNA; the 5S rRNA and some of its associated proteins might help stabilize positioning of ribosome-bound tRNAs. This chain is Large ribosomal subunit protein uL5, found in Rickettsia felis (strain ATCC VR-1525 / URRWXCal2) (Rickettsia azadi).